The primary structure comprises 323 residues: Putative HTH-type transcriptional regulatory protein Hlac_0273 (323 aa).

In terms of domain architecture, HTH cro/C1-type spans 132 to 189 (LADEREERGWSLGRLATELGVSRRTVSKYEDGMNASIEVAIQLEDLFNEPFSSPVDVL). A DNA-binding region (H-T-H motif) is located at residues 143 to 162 (LGRLATELGVSRRTVSKYED). The segment at 188-211 (VLDGAGEVRDADPTPSAPETDPDD) is disordered.

The polypeptide is Putative HTH-type transcriptional regulatory protein Hlac_0273 (Halorubrum lacusprofundi (strain ATCC 49239 / DSM 5036 / JCM 8891 / ACAM 34)).